Here is a 158-residue protein sequence, read N- to C-terminus: Ankyrin repeat domain-containing protein 37 (158 aa).

ANK repeat units follow at residues 1–25 (MLLL…SVNA), 30–59 (CEQS…DLNQ), and 63–92 (FGEA…QIDL). Residues 129–149 (EQPNKDHCVQVLRLKRSFGSE) carry the Nuclear localization signal motif.

Post-translationally, ubiquitinated by the CRL2(FEM1B) complex, leading to its degradation.

The protein resides in the nucleus. It is found in the cytoplasm. The protein is Ankyrin repeat domain-containing protein 37 (ANKRD37) of Bos taurus (Bovine).